The sequence spans 485 residues: Glutamyl-tRNA(Gln) amidotransferase subunit A (485 aa).

Active-site charge relay system residues include Lys78 and Ser153. The Acyl-ester intermediate role is filled by Ser177.

The protein belongs to the amidase family. GatA subfamily. As to quaternary structure, heterotrimer of A, B and C subunits.

It catalyses the reaction L-glutamyl-tRNA(Gln) + L-glutamine + ATP + H2O = L-glutaminyl-tRNA(Gln) + L-glutamate + ADP + phosphate + H(+). Functionally, allows the formation of correctly charged Gln-tRNA(Gln) through the transamidation of misacylated Glu-tRNA(Gln) in organisms which lack glutaminyl-tRNA synthetase. The reaction takes place in the presence of glutamine and ATP through an activated gamma-phospho-Glu-tRNA(Gln). The chain is Glutamyl-tRNA(Gln) amidotransferase subunit A from Geobacter metallireducens (strain ATCC 53774 / DSM 7210 / GS-15).